A 267-amino-acid polypeptide reads, in one-letter code: X-box-binding protein 1 (267 aa).

Residues 1 to 180 (MVVVAAAPSA…VQAQLSPPQN (180 aa)) are Cytoplasmic-facing. The segment at 35 to 60 (VPGPRAAGSEASGTPQARKRQRLTHL) is disordered. At Ser-61 the chain carries Phosphoserine. A bZIP domain is found at 63–126 (EEKALRRKLK…HGLVIENQEL (64 aa)). The interval 65–87 (KALRRKLKNRVAAQTARDRKKAR) is basic motif. Positions 69–85 (RKLKNRVAAQTARDRKK) are nuclear localization signal (NLS). The segment at 91–126 (LEQQVVDLEEENQKLQLENQLLREKTHGLVIENQEL) is leucine-zipper. A helical; Signal-anchor for type II membrane protein membrane pass occupies residues 181–198 (IFPWILTLLPLQILSLIS). Residues 199 to 267 (FWAFWTSWTL…FVLTMYTPSL (69 aa)) are Lumenal-facing.

This sequence belongs to the bZIP family. In terms of assembly, isoform 1 interacts with HM13. Isoform 1 interacts with RNF139; the interaction induces ubiquitination and degradation of isoform 1. Isoform 1 interacts (via luminal domain) with DERL1; the interaction obviates the need for ectodomain shedding prior HM13/SPP-mediated XBP1 isoform 1 cleavage. Isoform 1 interacts with HDAC3 and AKT1; the interactions occur in endothelial cell (EC) under disturbed flow. Isoform 1 interacts with the oncoprotein FOS. Interacts with SIRT1. In terms of processing, isoform 1 is ubiquitinated, leading to proteasome-mediated degradation in response to ER stress. X-box-binding protein 1, cytoplasmic form and luminal form are produced by intramembrane proteolytic cleavage of ER membrane-anchored isoform 1 triggered by HM13/SPP in a DERL1-RNF139-dependent and VCP/p97-independent manner. X-box-binding protein 1, luminal form is ubiquitinated leading to proteasomal degradation. Post-translationally, acetylated by EP300; acetylation positively regulates the transcriptional activity of XBP1. Deacetylated by SIRT1; deacetylation negatively regulates the transcriptional activity of XBP1.

The protein resides in the nucleus. Its subcellular location is the endoplasmic reticulum. The protein localises to the cytoplasm. It localises to the endoplasmic reticulum membrane. It is found in the membrane. Its function is as follows. Functions as a transcription factor during endoplasmic reticulum (ER) stress by regulating the unfolded protein response (UPR). Required for cardiac myogenesis and hepatogenesis during embryonic development, and the development of secretory tissues such as exocrine pancreas and salivary gland. Involved in terminal differentiation of B lymphocytes to plasma cells and production of immunoglobulins. Modulates the cellular response to ER stress in a PIK3R-dependent manner. Binds to the cis-acting X box present in the promoter regions of major histocompatibility complex class II genes. Involved in VEGF-induced endothelial cell (EC) proliferation and retinal blood vessel formation during embryonic development but also for angiogenesis in adult tissues under ischemic conditions. Functions also as a major regulator of the UPR in obesity-induced insulin resistance and type 2 diabetes for the management of obesity and diabetes prevention. Acts as a weak transcriptional factor. Together with HDAC3, contributes to the activation of NFE2L2-mediated HMOX1 transcription factor gene expression in a PI(3)K/mTORC2/Akt-dependent signaling pathway leading to EC survival under disturbed flow/oxidative stress. Binds to the ER stress response element (ERSE) upon ER stress. Binds to the consensus 5'-GATGACGTG[TG]N(3)[AT]T-3' sequence related to cAMP responsive element (CRE)-like sequences. Associates preferentially to the HDAC3 gene promoter region in a static flow-dependent manner. Binds to the CDH5/VE-cadherin gene promoter region. This is X-box-binding protein 1 from Rattus norvegicus (Rat).